The primary structure comprises 368 residues: Quinolinate synthase (368 aa).

Residues H46 and S63 each contribute to the iminosuccinate site. C110 lines the [4Fe-4S] cluster pocket. Iminosuccinate-binding positions include 141 to 143 (YVN) and S162. A [4Fe-4S] cluster-binding site is contributed by C230. Residues 256-258 (HPE) and T273 contribute to the iminosuccinate site. A [4Fe-4S] cluster-binding site is contributed by C320.

It belongs to the quinolinate synthase family. Type 3 subfamily. As to quaternary structure, homotrimer. Requires [4Fe-4S] cluster as cofactor.

It is found in the cytoplasm. It carries out the reaction iminosuccinate + dihydroxyacetone phosphate = quinolinate + phosphate + 2 H2O + H(+). The protein operates within cofactor biosynthesis; NAD(+) biosynthesis; quinolinate from iminoaspartate: step 1/1. Functionally, catalyzes the condensation of iminoaspartate with dihydroxyacetone phosphate to form quinolinate. The sequence is that of Quinolinate synthase from Bacillus subtilis (strain 168).